Consider the following 146-residue polypeptide: Holo-[acyl-carrier-protein] synthase (146 aa).

Mg(2+) contacts are provided by Asp-9 and Glu-63.

It belongs to the P-Pant transferase superfamily. AcpS family. It depends on Mg(2+) as a cofactor.

It localises to the cytoplasm. It carries out the reaction apo-[ACP] + CoA = holo-[ACP] + adenosine 3',5'-bisphosphate + H(+). In terms of biological role, transfers the 4'-phosphopantetheine moiety from coenzyme A to a Ser of acyl-carrier-protein. In Burkholderia ambifaria (strain ATCC BAA-244 / DSM 16087 / CCUG 44356 / LMG 19182 / AMMD) (Burkholderia cepacia (strain AMMD)), this protein is Holo-[acyl-carrier-protein] synthase.